A 582-amino-acid chain; its full sequence is PCNA-interacting partner (582 aa).

Composition is skewed to polar residues over residues 471-487 (GVNS…SSGN) and 501-510 (KSSSLTGNTS). A disordered region spans residues 471–514 (GVNSSVGRPTIGTSSGNVHLGRSEKEKVARKSSSLTGNTSSKRK).

It belongs to the PARI family. As to quaternary structure, interacts with RAD51 and PCNA. Interacts with PARP1. Interacts with TASOR.

The protein localises to the cytoplasm. It localises to the nucleus. In terms of biological role, required to suppress inappropriate homologous recombination, thereby playing a central role DNA repair and in the maintenance of genomic stability. Antagonizes homologous recombination by interfering with the formation of the RAD51-DNA homologous recombination structure. Binds single-strand DNA and poly(A) homopolymers. Positively regulate the poly(ADP-ribosyl)ation activity of PARP1; however such function may be indirect. This Bos taurus (Bovine) protein is PCNA-interacting partner (PARPBP).